We begin with the raw amino-acid sequence, 396 residues long: Elongation factor Tu (396 aa).

One can recognise a tr-type G domain in the interval 10–206; it reads KPHVNIGTIG…AVDNYIPEPE (197 aa). A G1 region spans residues 19-26; it reads GHVDHGKT. 19-26 contacts GTP; that stretch reads GHVDHGKT. Residue Thr26 participates in Mg(2+) binding. Positions 60-64 are G2; it reads GITIA. Residues 81 to 84 form a G3 region; sequence DCPG. GTP-binding positions include 81–85 and 136–139; these read DCPGH and NKAD. The interval 136–139 is G4; sequence NKAD. A G5 region spans residues 174–176; it reads SAL.

The protein belongs to the TRAFAC class translation factor GTPase superfamily. Classic translation factor GTPase family. EF-Tu/EF-1A subfamily. In terms of assembly, monomer.

Its subcellular location is the cytoplasm. It carries out the reaction GTP + H2O = GDP + phosphate + H(+). Functionally, GTP hydrolase that promotes the GTP-dependent binding of aminoacyl-tRNA to the A-site of ribosomes during protein biosynthesis. This chain is Elongation factor Tu, found in Geobacter sulfurreducens (strain ATCC 51573 / DSM 12127 / PCA).